Reading from the N-terminus, the 443-residue chain is Trigger factor (443 aa).

The region spanning 169–254 is the PPIase FKBP-type domain; sequence GDIAFLDFSG…LNSIKEVQLP (86 aa).

The protein belongs to the FKBP-type PPIase family. Tig subfamily.

The protein resides in the cytoplasm. The enzyme catalyses [protein]-peptidylproline (omega=180) = [protein]-peptidylproline (omega=0). Involved in protein export. Acts as a chaperone by maintaining the newly synthesized protein in an open conformation. Functions as a peptidyl-prolyl cis-trans isomerase. This Mycoplasmoides gallisepticum (strain R(low / passage 15 / clone 2)) (Mycoplasma gallisepticum) protein is Trigger factor.